The chain runs to 150 residues: 1,4-dihydroxy-2-naphthoyl-CoA hydrolase (150 aa).

D19 is a catalytic residue.

Belongs to the 4-hydroxybenzoyl-CoA thioesterase family. DHNA-CoA hydrolase subfamily.

It catalyses the reaction 1,4-dihydroxy-2-naphthoyl-CoA + H2O = 1,4-dihydroxy-2-naphthoate + CoA + H(+). Its pathway is cofactor biosynthesis; phylloquinone biosynthesis. It participates in quinol/quinone metabolism; 1,4-dihydroxy-2-naphthoate biosynthesis; 1,4-dihydroxy-2-naphthoate from chorismate: step 7/7. Catalyzes the hydrolysis of 1,4-dihydroxy-2-naphthoyl-CoA (DHNA-CoA) to 1,4-dihydroxy-2-naphthoate (DHNA), a reaction involved in phylloquinone (vitamin K1) biosynthesis. This Prochlorococcus marinus (strain MIT 9215) protein is 1,4-dihydroxy-2-naphthoyl-CoA hydrolase.